The sequence spans 240 residues: Adenosylcobinamide-GDP ribazoletransferase (240 aa).

A run of 5 helical transmembrane segments spans residues 31–51 (LLYY…ASHL), 62–81 (ALLL…DGLA), 109–129 (IAVV…WVLV), 133–153 (IGAQ…GLFL), and 179–199 (VLLV…LLAL).

It belongs to the CobS family. Requires Mg(2+) as cofactor.

Its subcellular location is the cell inner membrane. The enzyme catalyses alpha-ribazole + adenosylcob(III)inamide-GDP = adenosylcob(III)alamin + GMP + H(+). It carries out the reaction alpha-ribazole 5'-phosphate + adenosylcob(III)inamide-GDP = adenosylcob(III)alamin 5'-phosphate + GMP + H(+). Its pathway is cofactor biosynthesis; adenosylcobalamin biosynthesis; adenosylcobalamin from cob(II)yrinate a,c-diamide: step 7/7. In terms of biological role, joins adenosylcobinamide-GDP and alpha-ribazole to generate adenosylcobalamin (Ado-cobalamin). Also synthesizes adenosylcobalamin 5'-phosphate from adenosylcobinamide-GDP and alpha-ribazole 5'-phosphate. This is Adenosylcobinamide-GDP ribazoletransferase from Pseudomonas putida (strain ATCC 700007 / DSM 6899 / JCM 31910 / BCRC 17059 / LMG 24140 / F1).